We begin with the raw amino-acid sequence, 94 residues long: MMDLFKFFSKDNGTSKKVAKERLKLVLVHDRTNCSPRFLEMLKEDIIKVISDYVEIDEVGLEIKLTTTKRDFDEQSVPALVANIPIKKMKERSR.

The protein belongs to the MinE family.

In terms of biological role, prevents the cell division inhibition by proteins MinC and MinD at internal division sites while permitting inhibition at polar sites. This ensures cell division at the proper site by restricting the formation of a division septum at the midpoint of the long axis of the cell. The sequence is that of Cell division topological specificity factor from Alkaliphilus metalliredigens (strain QYMF).